The sequence spans 384 residues: MDDNPTAVKLDQGGNQAPQGQGRRRLPKALGYITGDMKEFANWLKDKPQALQFVDWVLRGISQVVFVSNPISGILILVGLLVQNPWCALNGCVGTVVSTLTALLLNQDRSAITAGLQGYNATLVGILMAIYSDKGNYFWWLLFPVSAMSMTCPIFSSALNSVLSKWDLPVFTLPFNMALSMYLSATGHFNPFFPSTLVTPVTSVPNVTWPDLSALQLLKSLPVGVGQIYGCDNPWAGGIFLGAILLSSPLMCLHAAIGSLLGIIAGLSLSAPFENIYAGLWGFNSSLACIAIGGMFMALTWQTHLLALACALFTAYLGASMSHVMAVVGLPSCTWPFCLATLLFLLLTTKNPNIYKMPISKVTYPEENRIFYLQSTKRTVQGPL.

Residues 1-23 (MDDNPTAVKLDQGGNQAPQGQGR) form a disordered region. A run of 5 helical transmembrane segments spans residues 61 to 81 (ISQV…VGLL), 85 to 105 (PWCA…ALLL), 111 to 131 (AITA…MAIY), 138 to 158 (FWWL…FSSA), and 169 to 189 (PVFT…TGHF). N-linked (GlcNAc...) asparagine glycosylation occurs at Asn206. A run of 3 helical transmembrane segments spans residues 237–257 (GGIF…HAAI), 279–299 (GLWG…FMAL), and 327–347 (VVGL…FLLL).

This sequence belongs to the urea transporter family. In terms of assembly, homotrimer; each subunit contains a pore through which urea permeates. Identified in a complex with STOM.

Its subcellular location is the cell membrane. It is found in the basolateral cell membrane. It carries out the reaction urea(in) = urea(out). In terms of biological role, mediates the transport of urea driven by a concentration gradient across the cell membranes of erythrocytes and the renal inner medullary collecting duct which is critical to the urinary concentrating mechanism. Facilitates water transport in erythrocytes. The sequence is that of Urea transporter 1 (SLC14A1) from Ovis aries (Sheep).